Consider the following 553-residue polypeptide: Putative transport protein YidE (553 aa).

The next 5 helical transmembrane spans lie at 4–24 (IALT…IGNV), 28–48 (GIGL…HFVS), 65–85 (FGLI…FFAS), 95–115 (LFAV…HKLF), and 158–178 (MSYA…MWML). RCK C-terminal domains follow at residues 191-276 (QQHE…VIGQ) and 279-361 (DTSL…VLGN). The next 6 helical transmembrane spans lie at 371-391 (MLPV…PVFV), 393-413 (GFPA…ALIL), 439-459 (IVLF…NTLV), 464-484 (LSWI…VGIL), 493-513 (YLTM…LAFA), and 533-553 (LVMF…WSIG).

It belongs to the AAE transporter (TC 2.A.81) family. YidE subfamily.

Its subcellular location is the cell membrane. The chain is Putative transport protein YidE from Escherichia coli (strain ATCC 8739 / DSM 1576 / NBRC 3972 / NCIMB 8545 / WDCM 00012 / Crooks).